We begin with the raw amino-acid sequence, 391 residues long: Anhydro-N-acetylmuramic acid kinase (391 aa).

9–16 (GTSVDGID) contributes to the ATP binding site.

Belongs to the anhydro-N-acetylmuramic acid kinase family.

It catalyses the reaction 1,6-anhydro-N-acetyl-beta-muramate + ATP + H2O = N-acetyl-D-muramate 6-phosphate + ADP + H(+). Its pathway is amino-sugar metabolism; 1,6-anhydro-N-acetylmuramate degradation. It participates in cell wall biogenesis; peptidoglycan recycling. Functionally, catalyzes the specific phosphorylation of 1,6-anhydro-N-acetylmuramic acid (anhMurNAc) with the simultaneous cleavage of the 1,6-anhydro ring, generating MurNAc-6-P. Is required for the utilization of anhMurNAc either imported from the medium or derived from its own cell wall murein, and thus plays a role in cell wall recycling. The sequence is that of Anhydro-N-acetylmuramic acid kinase from Gloeothece citriformis (strain PCC 7424) (Cyanothece sp. (strain PCC 7424)).